The chain runs to 580 residues: External alternative NAD(P)H-ubiquinone oxidoreductase B3, mitochondrial (580 aa).

The N-terminal 38 residues, 1–38, are a transit peptide targeting the mitochondrion; sequence MRPFAYFERLSQAFHDYPSLSKILVVSTISGGGLIVYS. Residue 57-87 coordinates FAD; that stretch reads KVVLLGTGWAGASFLKTLNNSSYEVQVISPR. Residue 221–257 participates in NAD(+) binding; that stretch reads LHFVVVGGGPTGVEFASELHDFVNEDLVKLYPKAKNL. The EF-hand domain occupies 377–412; sequence KVMEDIAAIFKKADKENSGTLTMKEFHEVMSDICDR. Ca(2+)-binding residues include D390, S394, T396, and E401. Residues 571 to 580 carry the Microbody targeting signal motif; that stretch reads FIFGRDSSRI.

It belongs to the NADH dehydrogenase family. Requires FAD as cofactor. In terms of tissue distribution, expressed at low levels in seedlings, roots, stems, buds and flowers and, to a lower extent, in leaves and cotyledons.

Its subcellular location is the mitochondrion inner membrane. The protein localises to the peroxisome. The enzyme catalyses a quinone + NADH + H(+) = a quinol + NAD(+). It carries out the reaction a ubiquinone + NADH + H(+) = a ubiquinol + NAD(+). Its function is as follows. Alternative NADH-ubiquinone oxidoreductase which catalyzes the oxidation of mitochondrial NADH does not translocate protons across the inner mitochondrial membrane. This chain is External alternative NAD(P)H-ubiquinone oxidoreductase B3, mitochondrial (NDB3), found in Arabidopsis thaliana (Mouse-ear cress).